Consider the following 312-residue polypeptide: Acetyl-coenzyme A carboxylase carboxyl transferase subunit alpha (312 aa).

In terms of domain architecture, CoA carboxyltransferase C-terminal spans 25–286; that stretch reads GDDSAVEILK…GNYIIEKLNE (262 aa).

This sequence belongs to the AccA family. Acetyl-CoA carboxylase is a heterohexamer composed of biotin carboxyl carrier protein (AccB), biotin carboxylase (AccC) and two subunits each of ACCase subunit alpha (AccA) and ACCase subunit beta (AccD).

Its subcellular location is the cytoplasm. It catalyses the reaction N(6)-carboxybiotinyl-L-lysyl-[protein] + acetyl-CoA = N(6)-biotinyl-L-lysyl-[protein] + malonyl-CoA. It participates in lipid metabolism; malonyl-CoA biosynthesis; malonyl-CoA from acetyl-CoA: step 1/1. Its function is as follows. Component of the acetyl coenzyme A carboxylase (ACC) complex. First, biotin carboxylase catalyzes the carboxylation of biotin on its carrier protein (BCCP) and then the CO(2) group is transferred by the carboxyltransferase to acetyl-CoA to form malonyl-CoA. The protein is Acetyl-coenzyme A carboxylase carboxyl transferase subunit alpha of Campylobacter hominis (strain ATCC BAA-381 / DSM 21671 / CCUG 45161 / LMG 19568 / NCTC 13146 / CH001A).